A 715-amino-acid polypeptide reads, in one-letter code: Fatty acid oxidation complex subunit alpha (715 aa).

The segment at 1-190 (MIYEGKAITV…KVGAVDAVVA (190 aa)) is enoyl-CoA hydratase/isomerase. A substrate-binding site is contributed by Asp-297. Positions 312–715 (HDVKQAAVLG…MAKNGQRFFN (404 aa)) are 3-hydroxyacyl-CoA dehydrogenase. Residues Met-325, Asp-344, 401–403 (VVE), Lys-408, and Ser-430 each bind NAD(+). The active-site For 3-hydroxyacyl-CoA dehydrogenase activity is the His-451. Asn-454 is an NAD(+) binding site. Substrate is bound by residues Asn-501 and Tyr-660.

The protein in the N-terminal section; belongs to the enoyl-CoA hydratase/isomerase family. It in the C-terminal section; belongs to the 3-hydroxyacyl-CoA dehydrogenase family. Heterotetramer of two alpha chains (FadB) and two beta chains (FadA).

The enzyme catalyses a (3S)-3-hydroxyacyl-CoA + NAD(+) = a 3-oxoacyl-CoA + NADH + H(+). It catalyses the reaction a (3S)-3-hydroxyacyl-CoA = a (2E)-enoyl-CoA + H2O. It carries out the reaction a 4-saturated-(3S)-3-hydroxyacyl-CoA = a (3E)-enoyl-CoA + H2O. The catalysed reaction is (3S)-3-hydroxybutanoyl-CoA = (3R)-3-hydroxybutanoyl-CoA. The enzyme catalyses a (3Z)-enoyl-CoA = a 4-saturated (2E)-enoyl-CoA. It catalyses the reaction a (3E)-enoyl-CoA = a 4-saturated (2E)-enoyl-CoA. It participates in lipid metabolism; fatty acid beta-oxidation. Involved in the aerobic and anaerobic degradation of long-chain fatty acids via beta-oxidation cycle. Catalyzes the formation of 3-oxoacyl-CoA from enoyl-CoA via L-3-hydroxyacyl-CoA. It can also use D-3-hydroxyacyl-CoA and cis-3-enoyl-CoA as substrate. This chain is Fatty acid oxidation complex subunit alpha, found in Pseudomonas putida (strain ATCC 47054 / DSM 6125 / CFBP 8728 / NCIMB 11950 / KT2440).